Reading from the N-terminus, the 797-residue chain is N-acetylneuraminate (7)9-O-acetyltransferase (797 aa).

The Cytoplasmic segment spans residues 1–18; sequence MAALAYNLGKREINHYFS. Residues 19–39 traverse the membrane as a helical segment; that stretch reads VRSAKVLALVAVLLLAACHLA. At 40–313 the chain is on the lumenal side; it reads SRRYRGNDSC…QPRPPLTLIQ (274 aa). Asn46 is a glycosylation site (N-linked (GlcNAc...) asparagine). The active-site Acyl-ester intermediate is the Ser94. 2 N-linked (GlcNAc...) asparagine glycosylation sites follow: Asn175 and Asn187. Residues Asp270 and His273 contribute to the active site. Residues 314 to 334 form a helical membrane-spanning segment; sequence KLAACFFTLSIIGYFIFYVIH. Residues 335–363 are Cytoplasmic-facing; sequence RNAHRKNKPCTDLESGEEKKNIINTPVSS. A helical transmembrane segment spans residues 364 to 384; the sequence is LEILLQSFCKLGLIMAYFYMC. Residues 385 to 395 are Lumenal-facing; that stretch reads DRANLFMKENK. Residues 396–416 form a helical membrane-spanning segment; the sequence is FYTHSSFFIPIIYILVLGVFY. At 417-439 the chain is on the cytoplasmic side; that stretch reads NENTKETKVLNREQTDEWKGWMQ. Residues 440-460 traverse the membrane as a helical segment; sequence LVILIYHISGASTFLPVYMHI. Arg461 is a topological domain (lumenal). The helical transmembrane segment at 462–482 threads the bilayer; it reads VLVAAYLFQTGYGHFSYFWIK. The Cytoplasmic segment spans residues 483-486; that stretch reads GDFG. The chain crosses the membrane as a helical span at residues 487 to 507; the sequence is IHRVCQVLFRLNFLVVVLCIV. At 508 to 513 the chain is on the lumenal side; it reads MDRPYQ. The helical transmembrane segment at 514–534 threads the bilayer; the sequence is FYYFVPLVTVWFMVIYVTLAL. Residues 535 to 546 lie on the Cytoplasmic side of the membrane; sequence WPQITQKKANGN. Residues 547-567 form a helical membrane-spanning segment; it reads FFWYLGLLLKLGLLLLCIWFL. The Lumenal segment spans residues 568–599; that stretch reads AYSQGAFEKIFSLWPLSKCFELEGSVYEWWFR. Residues 600 to 620 traverse the membrane as a helical segment; the sequence is WRLDRYVVFHGVLFAFIYLAL. The Cytoplasmic segment spans residues 621–638; the sequence is QRRQILSEGKGEPLFSNK. Residues 639 to 659 form a helical membrane-spanning segment; it reads ISNFLLFVSVVSFLTYSIWAS. The Lumenal segment spans residues 660–671; that stretch reads SCKNKAECNELH. A helical membrane pass occupies residues 672-692; sequence PSVSVVQIVAFILIRNIPGYA. The Cytoplasmic segment spans residues 693–698; sequence RSIYSS. Residues 699–719 traverse the membrane as a helical segment; that stretch reads FFAWFGKISLELFICQYHIWL. The Lumenal segment spans residues 720 to 725; that stretch reads AADTRG. A helical membrane pass occupies residues 726–746; sequence ILVLIPGNPTLNIIVSTFIFV. The Cytoplasmic segment spans residues 747–770; sequence CVAHEISQITTDLAQVVIPKDNPS. The chain crosses the membrane as a helical span at residues 771–791; it reads LFRRLACTIAFFGGVLILSSI. Over 792–797 the chain is Lumenal; sequence QDKSRL.

Belongs to the PC-esterase family. CASD1 subfamily. In terms of processing, N-glycosylated. As to expression, ubiquitously expressed.

It localises to the golgi apparatus membrane. The enzyme catalyses CMP-N-acetyl-beta-neuraminate + acetyl-CoA = CMP-N-acetyl-9-O-acetyl-beta-neuraminate + CoA. The catalysed reaction is a ganglioside GD3 (d18:1(4E)) + acetyl-CoA = a ganglioside Ac-O-7-GD3(d18:1(4E)) + CoA. It carries out the reaction CMP-N-acetyl-beta-neuraminate + acetyl-CoA = CMP-N-acetyl-7-O-acetyl-beta-neuraminate + CoA. Key enzyme in the biosynthesis of O-acetylated (O-Ac) sialoglycans such as gangliosides O-AcGD3 and O-AcGD2, which affect various processes such as cell-cell interactions, host-pathogen recognition. Catalyzes the transfer of an acetyl group from a donor, the acetyl-coenzyme-A molecule (acetyl-CoA), to the C7/8/9 OH-position of a sialic acid residue. The primary site of O-acetyl group transfer on sialic acid seems to depend on cell type and can be C7, from which the O-acetyl group could subsequently migrate to the C8 and then to the C9 position, or at C9 with possibility of migrating to the C8 and then to the C7 position. Together with ST8SIA1 (GD3 synthase) it increases the levels of ganglioside Ac-O-7-GD3. Can transfer the acetyl group from acetyl-CoA to free sialate (N-acetylneuraminate, Neu5Ac) in vitro, but has preferred substrate specificity for CMP-activated sialate (CMP-Neu5Ac), resulting in the formation of 9-O-acetylated CMP-Neu5Ac (CMP-Neu5,9Ac2). CMP-Neu5,9Ac2 may be used by sialyltransferases as a sialate donor for glycoconjugate acceptors such as ganglioside GD3. O-acetylation at position C9 of ganglioside GD3 can counteract the pro-apoptotic effects of the ganglioside GD3 in tumor cells. The polypeptide is N-acetylneuraminate (7)9-O-acetyltransferase (Mus musculus (Mouse)).